Consider the following 1203-residue polypeptide: DNA-directed RNA polymerase subunit beta (1203 aa).

Over residues 1174 to 1195 (AAQEAKAAFEAEEAEKATKAEA) the composition is skewed to basic and acidic residues. Residues 1174–1203 (AAQEAKAAFEAEEAEKATKAEATEEAAEQE) are disordered.

The protein belongs to the RNA polymerase beta chain family. The RNAP catalytic core consists of 2 alpha, 1 beta, 1 beta' and 1 omega subunit. When a sigma factor is associated with the core the holoenzyme is formed, which can initiate transcription.

It carries out the reaction RNA(n) + a ribonucleoside 5'-triphosphate = RNA(n+1) + diphosphate. In terms of biological role, DNA-dependent RNA polymerase catalyzes the transcription of DNA into RNA using the four ribonucleoside triphosphates as substrates. The polypeptide is DNA-directed RNA polymerase subunit beta (Streptococcus pneumoniae (strain ATCC 700669 / Spain 23F-1)).